The following is a 369-amino-acid chain: Putative 2-aminoethylphosphonate import ATP-binding protein PhnT (369 aa).

The region spanning 19 to 250 (IVLDSLRVAY…PPNRFAAEFL (232 aa)) is the ABC transporter domain. 51–58 (GPSGSGKT) contributes to the ATP binding site.

Belongs to the ABC transporter superfamily. 2-aminoethylphosphonate importer (TC 3.A.1.11.5) family.

The protein resides in the cell inner membrane. Functionally, probably part of the PhnSTUV complex (TC 3.A.1.11.5) involved in 2-aminoethylphosphonate import. Probably responsible for energy coupling to the transport system. The polypeptide is Putative 2-aminoethylphosphonate import ATP-binding protein PhnT (phnT) (Salmonella paratyphi A (strain ATCC 9150 / SARB42)).